Consider the following 112-residue polypeptide: uncharacterized protein (112 aa).

2 coiled-coil regions span residues 15–53 (AEKK…FFKF) and 86–103 (LDYE…TERK).

This is an uncharacterized protein from Aquifex aeolicus (strain VF5).